The sequence spans 215 residues: Putative zinc finger protein ORF121 (215 aa).

The RING-type; degenerate zinc finger occupies 53 to 105 (CVICMEPTYTKKTLAECDIEGGALRVTTMPCPTHYICDNCIRQEMEDKCPICR).

The polypeptide is Putative zinc finger protein ORF121 (Magallana gigas (Pacific oyster)).